The sequence spans 396 residues: NADH-quinone oxidoreductase subunit D (396 aa).

It belongs to the complex I 49 kDa subunit family. NDH-1 is composed of 14 different subunits. Subunits NuoB, C, D, E, F, and G constitute the peripheral sector of the complex.

It localises to the cell inner membrane. It carries out the reaction a quinone + NADH + 5 H(+)(in) = a quinol + NAD(+) + 4 H(+)(out). In terms of biological role, NDH-1 shuttles electrons from NADH, via FMN and iron-sulfur (Fe-S) centers, to quinones in the respiratory chain. The immediate electron acceptor for the enzyme in this species is believed to be ubiquinone. Couples the redox reaction to proton translocation (for every two electrons transferred, four hydrogen ions are translocated across the cytoplasmic membrane), and thus conserves the redox energy in a proton gradient. This chain is NADH-quinone oxidoreductase subunit D, found in Mesorhizobium japonicum (strain LMG 29417 / CECT 9101 / MAFF 303099) (Mesorhizobium loti (strain MAFF 303099)).